We begin with the raw amino-acid sequence, 201 residues long: MAWVWALVLLAALGSARAERDCRVSSFRVKENFDKARFSGTWYAMAKKDPEGLFLQDNIVAEFSVDENGQMSATAKGRVRLLNNWDVCADMVGTFTDTEDSAKFKMKYWGVASFLQKGNDDHWIIDTDYDTYAVQYSCRLLNLDGTCADSYSFVFARDPNGLPPDVQKIVRQRQDELCLARQYRLIVHNGYCDGKSEQNIL.

An N-terminal signal peptide occupies residues 1 to 18 (MAWVWALVLLAALGSARA). 3 cysteine pairs are disulfide-bonded: C22–C178, C88–C192, and C138–C147. Residue Q116 participates in substrate binding. The residue at position 139 (R139) is an Omega-N-methylarginine.

The protein belongs to the calycin superfamily. Lipocalin family. Interacts with TTR. Interaction with TTR prevents its loss by filtration through the kidney glomeruli. Interacts with STRA6. In terms of tissue distribution, highly expressed in liver. Also expressed in adipose tissue. Expressed by endometrium from days 16-25 and by unattached chorioallantois from days 30-36 during pregnancy.

Its subcellular location is the secreted. Functionally, retinol-binding protein that mediates retinol transport in blood plasma. Delivers retinol from the liver stores to the peripheral tissues. Transfers the bound all-trans retinol to STRA6, that then facilitates retinol transport across the cell membrane. In Felis catus (Cat), this protein is Retinol binding protein 4.